Consider the following 307-residue polypeptide: MAKKKIAISCGDIQGVGLELILKSHKEVSALCEPLYLIDSELLERANQLLNNAYETKTLNTLAINAPLPLLNSGTIGKVSAQSGAYSFESFKKACELADDKEVDGICTLPINKLAWQQAQIPFVGHTDFLKQRYKDHQIIMMLGCFRLFVGLFSDHVPLGAVSQLIQVKALVRFLLAFQKSTQAKIIQVCGFNPHAGEEGLFGKEDAKILKAIQKSNQTLGFECFLGPLPADSAFAPNKRKITPFYVSMSHDVGLAPLKALYFDESINVSLNAPILRASTDHGTAFDIAYQNKANNKSYVNAIKYLA.

Positions 126 and 127 each coordinate substrate. Residues His-156, His-195, and His-251 each coordinate a divalent metal cation. Residues Lys-259, Asn-268, and Arg-277 each contribute to the substrate site.

The protein belongs to the PdxA family. Homodimer. Zn(2+) is required as a cofactor. Mg(2+) serves as cofactor. Requires Co(2+) as cofactor.

The protein localises to the cytoplasm. It carries out the reaction 4-(phosphooxy)-L-threonine + NAD(+) = 3-amino-2-oxopropyl phosphate + CO2 + NADH. Its pathway is cofactor biosynthesis; pyridoxine 5'-phosphate biosynthesis; pyridoxine 5'-phosphate from D-erythrose 4-phosphate: step 4/5. Its function is as follows. Catalyzes the NAD(P)-dependent oxidation of 4-(phosphooxy)-L-threonine (HTP) into 2-amino-3-oxo-4-(phosphooxy)butyric acid which spontaneously decarboxylates to form 3-amino-2-oxopropyl phosphate (AHAP). This Helicobacter pylori (strain Shi470) protein is 4-hydroxythreonine-4-phosphate dehydrogenase.